The primary structure comprises 240 residues: 4-hydroxy-tetrahydrodipicolinate reductase (240 aa).

Residues 8–13 (GSTGKM), 78–80 (GTT), and 102–105 (SANM) each bind NAD(+). The active-site Proton donor/acceptor is histidine 134. Residue histidine 135 coordinates (S)-2,3,4,5-tetrahydrodipicolinate. Catalysis depends on lysine 138, which acts as the Proton donor. 144-145 (GT) is a (S)-2,3,4,5-tetrahydrodipicolinate binding site.

Belongs to the DapB family.

It is found in the cytoplasm. The catalysed reaction is (S)-2,3,4,5-tetrahydrodipicolinate + NAD(+) + H2O = (2S,4S)-4-hydroxy-2,3,4,5-tetrahydrodipicolinate + NADH + H(+). It carries out the reaction (S)-2,3,4,5-tetrahydrodipicolinate + NADP(+) + H2O = (2S,4S)-4-hydroxy-2,3,4,5-tetrahydrodipicolinate + NADPH + H(+). The protein operates within amino-acid biosynthesis; L-lysine biosynthesis via DAP pathway; (S)-tetrahydrodipicolinate from L-aspartate: step 4/4. Its function is as follows. Catalyzes the conversion of 4-hydroxy-tetrahydrodipicolinate (HTPA) to tetrahydrodipicolinate. In Rickettsia canadensis (strain McKiel), this protein is 4-hydroxy-tetrahydrodipicolinate reductase.